A 100-amino-acid chain; its full sequence is Integration host factor subunit alpha (100 aa).

The protein belongs to the bacterial histone-like protein family. Heterodimer of an alpha and a beta chain.

Its function is as follows. This protein is one of the two subunits of integration host factor, a specific DNA-binding protein that functions in genetic recombination as well as in transcriptional and translational control. This Jannaschia sp. (strain CCS1) protein is Integration host factor subunit alpha.